Consider the following 459-residue polypeptide: Putrescine aminotransferase (459 aa).

Pyridoxal 5'-phosphate is bound by residues 150–151 (GT) and Gln274. An N6-(pyridoxal phosphate)lysine modification is found at Lys300. Thr332 serves as a coordination point for pyridoxal 5'-phosphate.

It belongs to the class-III pyridoxal-phosphate-dependent aminotransferase family. Putrescine aminotransferase subfamily. Pyridoxal 5'-phosphate is required as a cofactor.

The enzyme catalyses an alkane-alpha,omega-diamine + 2-oxoglutarate = an omega-aminoaldehyde + L-glutamate. It carries out the reaction putrescine + 2-oxoglutarate = 1-pyrroline + L-glutamate + H2O. The catalysed reaction is cadaverine + 2-oxoglutarate = 5-aminopentanal + L-glutamate. It functions in the pathway amine and polyamine degradation; putrescine degradation; 4-aminobutanal from putrescine (transaminase route): step 1/1. In terms of biological role, catalyzes the aminotransferase reaction from putrescine to 2-oxoglutarate, leading to glutamate and 4-aminobutanal, which spontaneously cyclizes to form 1-pyrroline. This is the first step in one of two pathways for putrescine degradation, where putrescine is converted into 4-aminobutanoate (gamma-aminobutyrate or GABA) via 4-aminobutanal. Also functions as a cadaverine transaminase in a a L-lysine degradation pathway to succinate that proceeds via cadaverine, glutarate and L-2-hydroxyglutarate. The polypeptide is Putrescine aminotransferase (Salmonella paratyphi B (strain ATCC BAA-1250 / SPB7)).